The chain runs to 159 residues: U1 small nuclear ribonucleoprotein C (159 aa).

The Matrin-type zinc-finger motif lies at 4-36 (FYCDYCDTYLTHDSPSVRKTHCSGRKHKENVKD). Positions 61–99 (KIPPTPFPGAPPPGGSLLPHPSIGGPPRPGMLPAPPMGG) are disordered. Composition is skewed to pro residues over residues 63–74 (PPTPFPGAPPPG) and 84–99 (GGPPRPGMLPAPPMGG).

It belongs to the U1 small nuclear ribonucleoprotein C family. In terms of assembly, component of the U1 snRNP. The U1 snRNP is composed of the U1 snRNA and the 7 core Sm proteins snrpb, snrpd1, snrpd2, snrpd3, snrpe, snrpf and snrpg that assemble in a heptameric protein ring on the Sm site of the small nuclear RNA to form the core snRNP, and at least 3 U1 snRNP-specific proteins snrnp70/U1-70K, snrpa/U1-A and snrpc/U1-C. snrpc/U1-C interacts with U1 snRNA and the 5' splice-site region of the pre-mRNA.

The protein resides in the nucleus. Component of the spliceosomal U1 snRNP, which is essential for recognition of the pre-mRNA 5' splice-site and the subsequent assembly of the spliceosome. snrpc/U1-C is directly involved in initial 5' splice-site recognition for both constitutive and regulated alternative splicing. The interaction with the 5' splice-site seems to precede base-pairing between the pre-mRNA and the U1 snRNA. Stimulates commitment or early (E) complex formation by stabilizing the base pairing of the 5' end of the U1 snRNA and the 5' splice-site region. The sequence is that of U1 small nuclear ribonucleoprotein C from Danio rerio (Zebrafish).